The following is a 489-amino-acid chain: Ent-kaurenoic acid oxidase 2 (489 aa).

Residues 5–25 form a helical membrane-spanning segment; sequence GLILMWFPLIILGLFVLKWVL. Heme is bound at residue C436.

This sequence belongs to the cytochrome P450 family. Heme serves as cofactor. In terms of tissue distribution, widely expressed. Highly expressed in influorescence stem, influorescence, and silique tissue. Weakly expressed in cauline and rosette leaves. Expressed at a weaker level in stem and influorescence than AtKAO1/CYP88A3.

The protein resides in the endoplasmic reticulum membrane. It carries out the reaction ent-kaur-16-en-19-oate + 3 reduced [NADPH--hemoprotein reductase] + 3 O2 = gibberellin A12 + 3 oxidized [NADPH--hemoprotein reductase] + 4 H2O + 4 H(+). The enzyme catalyses ent-kaur-16-en-19-oate + reduced [NADPH--hemoprotein reductase] + O2 = ent-7alpha-hydroxykaur-16-en-19-oate + oxidized [NADPH--hemoprotein reductase] + H2O + H(+). It catalyses the reaction ent-7alpha-hydroxykaur-16-en-19-oate + reduced [NADPH--hemoprotein reductase] + O2 = gibberellin A12 aldehyde + oxidized [NADPH--hemoprotein reductase] + 2 H2O + H(+). The catalysed reaction is gibberellin A12 aldehyde + reduced [NADPH--hemoprotein reductase] + O2 = gibberellin A12 + oxidized [NADPH--hemoprotein reductase] + H2O + 2 H(+). Its pathway is plant hormone biosynthesis; gibberellin biosynthesis. In terms of biological role, catalyzes three successive oxidations of ent-kaurenoic acid giving gibberellin 12 (GA12), a key step in gibberellins (GAs) biosynthesis. GAs, which are involved many processes, including stem elongation, play a central role in plant development. This Arabidopsis thaliana (Mouse-ear cress) protein is Ent-kaurenoic acid oxidase 2.